Consider the following 360-residue polypeptide: Peptide chain release factor 1 (360 aa).

Position 235 is an N5-methylglutamine (Gln-235). Positions Ala-291–Arg-308 are enriched in basic and acidic residues. Positions Ala-291–Phe-312 are disordered.

It belongs to the prokaryotic/mitochondrial release factor family. Post-translationally, methylated by PrmC. Methylation increases the termination efficiency of RF1.

It localises to the cytoplasm. Peptide chain release factor 1 directs the termination of translation in response to the peptide chain termination codons UAG and UAA. The protein is Peptide chain release factor 1 of Yersinia pseudotuberculosis serotype I (strain IP32953).